Here is a 441-residue protein sequence, read N- to C-terminus: 4-hydroxybenzoate polyprenyltransferase, mitochondrial (441 aa).

Residues 1–95 (MLRKLTSNSS…TLGELVLRDY (95 aa)) constitute a mitochondrion transit peptide. Helical transmembrane passes span 129-149 (IGSWLLFWPCGWSIALSAPAG), 154-174 (LWTLTLFGAGAFIMRGAGCTI), 204-224 (AWFFLGAQLGVGLLILLELNW), 225-245 (YSIVLGASSLGLVIIYPLMKR), 246-266 (ITHWPQLVLGMTFNWGALLGW), 271-291 (GSVMWSACLPLYVAGVCWTIV), 322-342 (LWLSGFSTAMIGGLVASGMVC), and 378-398 (FISNHQVGLILFLGIVLGTLY). Residues 405-441 (AGKSSTTSSSSTSSSSSPSSGLLLAATNHHQPARQAS) form a disordered region. The segment covering 408-424 (SSTTSSSSTSSSSSPSS) has biased composition (low complexity). The span at 432–441 (NHHQPARQAS) shows a compositional bias: polar residues.

The protein belongs to the UbiA prenyltransferase family. It depends on Mg(2+) as a cofactor.

It is found in the mitochondrion inner membrane. The catalysed reaction is an all-trans-polyprenyl diphosphate + 4-hydroxybenzoate = a 4-hydroxy-3-(all-trans-polyprenyl)benzoate + diphosphate. Its pathway is cofactor biosynthesis; ubiquinone biosynthesis. Its function is as follows. Catalyzes the prenylation of para-hydroxybenzoate (PHB) with an all-trans polyprenyl group. Mediates the second step in the final reaction sequence of coenzyme Q (CoQ) biosynthesis, which is the condensation of the polyisoprenoid side chain with PHB, generating the first membrane-bound Q intermediate. The polypeptide is 4-hydroxybenzoate polyprenyltransferase, mitochondrial (Aedes aegypti (Yellowfever mosquito)).